A 497-amino-acid polypeptide reads, in one-letter code: Serine/threonine-protein kinase 3 (497 aa).

Methionine 1 is modified (N-acetylmethionine). The tract at residues 1-20 is disordered; that stretch reads MEQPPASKSKLKKLSEDSLT. Serine 15 bears the Phosphoserine mark. The Protein kinase domain maps to 27–278; sequence FDVLEKLGEG…ATQLLQHPFI (252 aa). ATP contacts are provided by residues 33–41 and lysine 56; that span reads LGEGSYGSV. Threonine 117 carries the phosphothreonine; by PKB/AKT1 modification. Aspartate 146 acts as the Proton acceptor in catalysis. Positions 151 and 164 each coordinate Mg(2+). A Phosphothreonine; by autocatalysis modification is found at threonine 180. Residues 287 to 328 are a coiled coil; that stretch reads LRDLIAEAMEIKAKRHEEQQRELEEEEENSDEDELDSHTMVK. Disordered regions lie at residues 301-343 and 368-394; these read RHEE…TSTM and NSEE…SPQV. Over residues 309–321 the composition is skewed to acidic residues; it reads LEEEEENSDEDEL. Serine 316 bears the Phosphoserine mark. A compositionally biased stretch (polar residues) spans 326-343; the sequence is MVKTSSESVGTMRATSTM. Threonine 336 is modified (phosphothreonine). A coiled-coil region spans residues 366–387; sequence VINSEEEEEEEEEEEEDGTMKR. A compositionally biased stretch (acidic residues) spans 369-382; the sequence is SEEEEEEEEEEEED. Phosphothreonine is present on threonine 384. Threonine 390 carries the post-translational modification Phosphothreonine; by PKB/AKT1. Serine 391 and serine 450 each carry phosphoserine. An SARAH domain is found at 443-490; it reads FDFLKNLSLEELQMRLKALDPMMEREIEELHQRYSAKRQPILDAMDAK. A coiled-coil region spans residues 448-479; that stretch reads NLSLEELQMRLKALDPMMEREIEELHQRYSAK.

It belongs to the protein kinase superfamily. STE Ser/Thr protein kinase family. STE20 subfamily. As to quaternary structure, homodimer; mediated via the coiled-coil region. Interacts with NORE1, which inhibits autoactivation. Interacts with and stabilizes SAV1. Interacts with RAF1, which prevents dimerization and phosphorylation. Interacts with RASSF1. Interacts (via SARAH domain) with isoform 1 of NEK2. Interacts with ESR1 only in the presence of SAV1. Interacts with PKB/AKT1. Forms a tripartite complex with MOBKL1B and STK38. Interacts with RASSF2 (via SARAH domain). Interacts with DLG5 (via PDZ domain 3). Interacts with LATS1; this interaction is inhibited in the presence of DLG5. Interacts with MARK3 in the presence of DLG5. Interacts with RASSF5; this interaction inhibits STK3 autoactivation through heterodimerization. Interacts (when phosphorylated) with SLMAP (via FHA domain); the interaction associates STK3 with the STRIPAK complex. Mg(2+) is required as a cofactor. In terms of processing, autophosphorylated on two residues Thr-174 and Thr-180, leading to activation. Phosphorylation at Thr-117 and Thr-390 by PKB/AKT1, leads to inhibition of its: cleavage, kinase activity, autophosphorylation at Thr-180, binding to RASSF1 and nuclear translocation, and increase in its binding to RAF1. Phosphorylated at Ser-15 by PLK1, leading to activation. Post-translationally, proteolytically cleaved by caspase-3 during apoptosis. Proteolytic cleavage results in kinase activation and nuclear translocation of the truncated form (MST1/N). Ubiquitinated by TRIM69; leading to its redistribution to the perinuclear cytoskeleton.

It is found in the cytoplasm. Its subcellular location is the nucleus. It carries out the reaction L-seryl-[protein] + ATP = O-phospho-L-seryl-[protein] + ADP + H(+). It catalyses the reaction L-threonyl-[protein] + ATP = O-phospho-L-threonyl-[protein] + ADP + H(+). Its activity is regulated as follows. Inhibited by the C-terminal non-catalytic region. Activated by caspase-cleavage. Full activation also requires homodimerization and autophosphorylation of Thr-180, which are inhibited by the proto-oncogene product RAF1. Activated by RASSF1 which acts by preventing its dephosphorylation. When autophosphorylated at Thr-180, recruits STRIPAK complex and promotes PP2A-mediated dephosphorylation and inactivation of STK3. Its function is as follows. Stress-activated, pro-apoptotic kinase which, following caspase-cleavage, enters the nucleus and induces chromatin condensation followed by internucleosomal DNA fragmentation. Key component of the Hippo signaling pathway which plays a pivotal role in organ size control and tumor suppression by restricting proliferation and promoting apoptosis. The core of this pathway is composed of a kinase cascade wherein STK3/MST2 and STK4/MST1, in complex with its regulatory protein SAV1, phosphorylates and activates LATS1/2 in complex with its regulatory protein MOB1, which in turn phosphorylates and inactivates YAP1 oncoprotein and WWTR1/TAZ. Phosphorylation of YAP1 by LATS2 inhibits its translocation into the nucleus to regulate cellular genes important for cell proliferation, cell death, and cell migration. STK3/MST2 and STK4/MST1 are required to repress proliferation of mature hepatocytes, to prevent activation of facultative adult liver stem cells (oval cells), and to inhibit tumor formation. Phosphorylates NKX2-1. Phosphorylates NEK2 and plays a role in centrosome disjunction by regulating the localization of NEK2 to centrosomes, and its ability to phosphorylate CROCC and CEP250. In conjunction with SAV1, activates the transcriptional activity of ESR1 through the modulation of its phosphorylation. Positively regulates RAF1 activation via suppression of the inhibitory phosphorylation of RAF1 on 'Ser-259'. Phosphorylates MOBKL1A and RASSF2. Phosphorylates MOBKL1B on 'Thr-74'. Acts cooperatively with MOBKL1B to activate STK38. This Mus musculus (Mouse) protein is Serine/threonine-protein kinase 3 (Stk3).